Consider the following 130-residue polypeptide: Small ribosomal subunit protein uS8A (130 aa).

It belongs to the universal ribosomal protein uS8 family. In terms of assembly, component of the small ribosomal subunit (SSU). Mature ribosomes consist of a small (40S) and a large (60S) subunit. The 40S subunit contains about 32 different proteins and 1 molecule of RNA (18S). The 60S subunit contains 45 different proteins and 3 molecules of RNA (25S, 5.8S and 5S).

The protein localises to the cytoplasm. In terms of biological role, component of the ribosome, a large ribonucleoprotein complex responsible for the synthesis of proteins in the cell. The small ribosomal subunit (SSU) binds messenger RNAs (mRNAs) and translates the encoded message by selecting cognate aminoacyl-transfer RNA (tRNA) molecules. The large subunit (LSU) contains the ribosomal catalytic site termed the peptidyl transferase center (PTC), which catalyzes the formation of peptide bonds, thereby polymerizing the amino acids delivered by tRNAs into a polypeptide chain. The nascent polypeptides leave the ribosome through a tunnel in the LSU and interact with protein factors that function in enzymatic processing, targeting, and the membrane insertion of nascent chains at the exit of the ribosomal tunnel. The polypeptide is Small ribosomal subunit protein uS8A (RPS22A) (Candida albicans (strain SC5314 / ATCC MYA-2876) (Yeast)).